The chain runs to 43 residues: MEPATLITIFLSCFLVGVTGYALYTAFGQPSKELRDPFEEHED.

A helical transmembrane segment spans residues 7–27 (ITIFLSCFLVGVTGYALYTAF).

It belongs to the PsbN family.

The protein localises to the plastid. Its subcellular location is the chloroplast thylakoid membrane. Functionally, may play a role in photosystem I and II biogenesis. This Klebsormidium bilatum (Filamentous green alga) protein is Protein PsbN.